Consider the following 276-residue polypeptide: NH(3)-dependent NAD(+) synthetase (276 aa).

43 to 50 (GISGGVDS) provides a ligand contact to ATP. Residue Asp49 participates in Mg(2+) binding. Arg146 contributes to the deamido-NAD(+) binding site. Thr166 provides a ligand contact to ATP. Mg(2+) is bound at residue Glu171. Deamido-NAD(+) contacts are provided by Lys179 and Asp186. 2 residues coordinate ATP: Lys195 and Thr217. Residue 266-267 (HK) coordinates deamido-NAD(+).

It belongs to the NAD synthetase family. As to quaternary structure, homodimer.

The catalysed reaction is deamido-NAD(+) + NH4(+) + ATP = AMP + diphosphate + NAD(+) + H(+). Its pathway is cofactor biosynthesis; NAD(+) biosynthesis; NAD(+) from deamido-NAD(+) (ammonia route): step 1/1. Functionally, catalyzes the ATP-dependent amidation of deamido-NAD to form NAD. Uses ammonia as a nitrogen source. The sequence is that of NH(3)-dependent NAD(+) synthetase from Aliivibrio salmonicida (strain LFI1238) (Vibrio salmonicida (strain LFI1238)).